Consider the following 206-residue polypeptide: GCN5-like protein acetyltransferase Rv2170 (206 aa).

The 162-residue stretch at 44–205 (EHIRRRGWQA…AFAILGRTLP (162 aa)) folds into the N-acetyltransferase domain. The active-site Proton donor is the Y176.

The protein belongs to the acetyltransferase family.

The enzyme catalyses L-lysyl-[protein] + acetyl-CoA = N(6)-acetyl-L-lysyl-[protein] + CoA + H(+). It catalyses the reaction propanoyl-CoA + L-lysyl-[protein] = N(6)-propanoyl-L-lysyl-[protein] + CoA + H(+). It carries out the reaction succinyl-CoA + L-lysyl-[protein] = N(6)-succinyl-L-lysyl-[protein] + CoA + H(+). Its function is as follows. Acetyltransferase involved in the post-translational regulation of the central metabolic enzyme isocitrate dehydrogenase 1 (ICDH-1) through lysine acetylation. Catalyzes the acetylation of ICDH-1 at Lys-30 and Lys-129, using acetyl-CoA as a donor, leading to a reduction of ICDH-1 enzyme activity. Can also use propionyl-CoA and succinyl-CoA as donors. Cannot act on the isocitrate dehydrogenase 2 (ICDH-2). Might play a role in regulating the TCA cycle and methylcitrate cycle when M.tuberculosis utilizes fatty acid as carbon source. In terms of biological role, in addition, it can acetylate the amino group of isoniazid (INH), one of the first-line drugs used for the treatment of tuberculosis, thereby canceling out the drug toxicity. Acts by catalyzing the transfer of an acetyl group from acetyl-CoA to INH. Following acetylation, INH is broken down into isonicotinic acid and acetylhydrazine. M.smegmatis and M.tuberculosis H37Ra strains overexpressing Rv2170 are resistant to INH. Has little or no acetyltransferase activity with other antibiotics such as streptomycin, neomycin, kanamycin, amikacin, apramycin and gentamicin. This is GCN5-like protein acetyltransferase Rv2170 from Mycobacterium tuberculosis (strain ATCC 25618 / H37Rv).